We begin with the raw amino-acid sequence, 107 residues long: UPF0060 membrane protein RPB_2370 (107 aa).

4 consecutive transmembrane segments (helical) span residues 5–25, 31–51, 61–81, and 85–105; these read IIYVGAAIAEIAGCFAFWGWL, VWWLAPGLLSLALFAYLLTLV, AAYGGIYIVASLAWLWSVEGV, and RWDVSGACVCLAGAAIILWGP.

Belongs to the UPF0060 family.

It is found in the cell inner membrane. This is UPF0060 membrane protein RPB_2370 from Rhodopseudomonas palustris (strain HaA2).